The chain runs to 241 residues: UDP-2,3-diacylglucosamine hydrolase (241 aa).

5 residues coordinate Mn(2+): D8, H10, D41, N79, and H114. 79 to 80 (NR) is a substrate binding site. Positions 122, 164, 167, and 195 each coordinate substrate. H195 and H197 together coordinate Mn(2+).

Belongs to the LpxH family. Mn(2+) serves as cofactor.

The protein localises to the cell inner membrane. It catalyses the reaction UDP-2-N,3-O-bis[(3R)-3-hydroxytetradecanoyl]-alpha-D-glucosamine + H2O = 2-N,3-O-bis[(3R)-3-hydroxytetradecanoyl]-alpha-D-glucosaminyl 1-phosphate + UMP + 2 H(+). The protein operates within glycolipid biosynthesis; lipid IV(A) biosynthesis; lipid IV(A) from (3R)-3-hydroxytetradecanoyl-[acyl-carrier-protein] and UDP-N-acetyl-alpha-D-glucosamine: step 4/6. Hydrolyzes the pyrophosphate bond of UDP-2,3-diacylglucosamine to yield 2,3-diacylglucosamine 1-phosphate (lipid X) and UMP by catalyzing the attack of water at the alpha-P atom. Involved in the biosynthesis of lipid A, a phosphorylated glycolipid that anchors the lipopolysaccharide to the outer membrane of the cell. This chain is UDP-2,3-diacylglucosamine hydrolase, found in Aliivibrio fischeri (strain MJ11) (Vibrio fischeri).